The following is a 280-amino-acid chain: 4-diphosphocytidyl-2-C-methyl-D-erythritol kinase (280 aa).

Lysine 8 is an active-site residue. Residue 91–101 coordinates ATP; it reads PVAAGLAGGST. Aspartate 133 is a catalytic residue.

The protein belongs to the GHMP kinase family. IspE subfamily.

It carries out the reaction 4-CDP-2-C-methyl-D-erythritol + ATP = 4-CDP-2-C-methyl-D-erythritol 2-phosphate + ADP + H(+). The protein operates within isoprenoid biosynthesis; isopentenyl diphosphate biosynthesis via DXP pathway; isopentenyl diphosphate from 1-deoxy-D-xylulose 5-phosphate: step 3/6. Its function is as follows. Catalyzes the phosphorylation of the position 2 hydroxy group of 4-diphosphocytidyl-2C-methyl-D-erythritol. The polypeptide is 4-diphosphocytidyl-2-C-methyl-D-erythritol kinase (Clostridium botulinum (strain Loch Maree / Type A3)).